We begin with the raw amino-acid sequence, 541 residues long: Solute carrier family 22 member 10 (541 aa).

Topologically, residues 1 to 15 are cytoplasmic; sequence MAFEELLSQVGGLGR. The helical transmembrane segment at 16–36 threads the bilayer; sequence FQMLHLVFILPSLMLLIPHIL. Residues 37 to 145 are Extracellular-facing; the sequence is LENFAAAIPG…DLVCDYQSLK (109 aa). Residues asparagine 56 and asparagine 102 are each glycosylated (N-linked (GlcNAc...) asparagine). The helical transmembrane segment at 146-166 threads the bilayer; sequence SVVQFLLLTGMLVGGIIGGHV. Topologically, residues 167 to 193 are cytoplasmic; sequence SDRFGRRFILRWCLLQLAITDTCAAFA. A helical membrane pass occupies residues 194–214; sequence PTFPVYCVLRFLAGFSSMIII. The Extracellular portion of the chain corresponds to 215–230; that stretch reads SNNSLPITEWIRPNSK. Residues 231–251 form a helical membrane-spanning segment; the sequence is ALVVILSSGALSIGQIILGGL. The Cytoplasmic segment spans residues 252-259; the sequence is AYVFRDWQ. Residues 260–280 form a helical membrane-spanning segment; that stretch reads TLHVVASVPFFVFFLLSRWLV. The Extracellular segment spans residues 281–349; that stretch reads ESARWLIITN…LFRNPSMRKR (69 aa). A helical membrane pass occupies residues 350-370; the sequence is ICILVFLRFANTIPFYGTMVN. Over 371–377 the chain is Cytoplasmic; it reads LQHVGSN. Residues 378–398 traverse the membrane as a helical segment; it reads IFLLQVLYGAVALIVRCLALL. The Extracellular segment spans residues 399–406; that stretch reads TLNHMGRR. The chain crosses the membrane as a helical span at residues 407–427; the sequence is ISQILFMFLVGLSILANTFVP. Over 428-436 the chain is Cytoplasmic; sequence KEMQTLRVA. The chain crosses the membrane as a helical span at residues 437-457; sequence LACLGIGCSAATFSSVAVHFI. At 458–472 the chain is on the extracellular side; it reads ELIPTVLRARASGID. The helical transmembrane segment at 473–493 threads the bilayer; the sequence is LTASRIGAALAPLLMTLTVFF. Over 494–495 the chain is Cytoplasmic; it reads TT. Residues 496–516 traverse the membrane as a helical segment; it reads LPWIIYGIFPIIGGLIVFLLP. Over 517–541 the chain is Extracellular; that stretch reads ETKNLPLPDTIKDVENQKKNLKEKA.

Belongs to the major facilitator (TC 2.A.1) superfamily. Organic cation transporter (TC 2.A.1.19) family. In terms of tissue distribution, detected in fetal and adult liver, and in adult kidney.

Its subcellular location is the membrane. The polypeptide is Solute carrier family 22 member 10 (SLC22A10) (Homo sapiens (Human)).